The sequence spans 110 residues: Phosphoribosyl-ATP pyrophosphatase (110 aa).

This sequence belongs to the PRA-PH family.

The protein resides in the cytoplasm. It catalyses the reaction 1-(5-phospho-beta-D-ribosyl)-ATP + H2O = 1-(5-phospho-beta-D-ribosyl)-5'-AMP + diphosphate + H(+). The protein operates within amino-acid biosynthesis; L-histidine biosynthesis; L-histidine from 5-phospho-alpha-D-ribose 1-diphosphate: step 2/9. This chain is Phosphoribosyl-ATP pyrophosphatase, found in Stutzerimonas stutzeri (strain A1501) (Pseudomonas stutzeri).